The sequence spans 308 residues: Mycothiol acetyltransferase (308 aa).

2 consecutive N-acetyltransferase domains span residues 12-149 (DVLD…RPLG) and 165-308 (VTVR…RTET). Glu43 serves as a coordination point for 1D-myo-inositol 2-(L-cysteinylamino)-2-deoxy-alpha-D-glucopyranoside. 88–90 (LVV) is an acetyl-CoA binding site. Residues Glu192, Lys231, and Glu240 each contribute to the 1D-myo-inositol 2-(L-cysteinylamino)-2-deoxy-alpha-D-glucopyranoside site. Acetyl-CoA is bound by residues 244 to 246 (VGV) and 251 to 257 (QGGGLGR). Tyr278 lines the 1D-myo-inositol 2-(L-cysteinylamino)-2-deoxy-alpha-D-glucopyranoside pocket.

Belongs to the acetyltransferase family. MshD subfamily. In terms of assembly, monomer.

The enzyme catalyses 1D-myo-inositol 2-(L-cysteinylamino)-2-deoxy-alpha-D-glucopyranoside + acetyl-CoA = mycothiol + CoA + H(+). Functionally, catalyzes the transfer of acetyl from acetyl-CoA to desacetylmycothiol (Cys-GlcN-Ins) to form mycothiol. The chain is Mycothiol acetyltransferase from Streptomyces bingchenggensis (strain BCW-1).